Reading from the N-terminus, the 977-residue chain is uncharacterized protein (977 aa).

The interval 100-152 (ATSPLQQNGKSRDTEKPPSMKEKDLSSNSSSQHDKAFHERVDQGKNKSSTTKY) is disordered. Composition is skewed to basic and acidic residues over residues 109–124 (KSRDTEKPPSMKEKDL) and 131–144 (QHDKAFHERVDQGK). Residue S165 is modified to Phosphoserine. Composition is skewed to polar residues over residues 166–175 (PGQSVNSLKP) and 183–193 (STKSSTSSEMH). A disordered region spans residues 166–194 (PGQSVNSLKPNSGDEVPSTKSSTSSEMHT).

This is an uncharacterized protein from Schizosaccharomyces pombe (strain 972 / ATCC 24843) (Fission yeast).